Here is a 367-residue protein sequence, read N- to C-terminus: MIRRWLVIFILFPLQLIEKCESTVDFSVPPIVKLEKGSSTSVSISLPRPLNATLVITFEITFRSKNVTILQLPDEVVVPPGTTNSSFRVTSQSVGQVTTYLHGNHSNQTSPRIRFLVIHSNIVSIINQVIGWIYFVAWSVSFYPQVITNWRRKSVVGLSFDFVVLNLMGFVAYSVFNIGLFWVPSIKEQFLLKYPNGVNPVDSNDVFFSLHAVALTLVVIVQCLLYERGSQRVSWLAISFLVLSWLFTLIALIMAAVGATTWLQFLFCFSYIKLAVTLVKYFPQAYMNFHYKSTEGWSIGNVLLDFTGGSFSLLQMFLQSYNNDQWTLIFGDPTKFGLGIFSIIFDVVFFIQHFCLYRKKPGYDQLN.

An N-terminal signal peptide occupies residues 1–22; that stretch reads MIRRWLVIFILFPLQLIEKCES. At 23 to 125 the chain is on the lumenal side; it reads TVDFSVPPIV…LVIHSNIVSI (103 aa). 5 N-linked (GlcNAc...) asparagine glycosylation sites follow: Asn-51, Asn-66, Asn-84, Asn-104, and Asn-107. A PQ-loop 1 domain is found at 123-189; sequence VSIINQVIGW…LFWVPSIKEQ (67 aa). The helical transmembrane segment at 126-150 threads the bilayer; that stretch reads INQVIGWIYFVAWSVSFYPQVITNW. The Cytoplasmic segment spans residues 151–159; it reads RRKSVVGLS. A helical membrane pass occupies residues 160–179; the sequence is FDFVVLNLMGFVAYSVFNIG. Residue Asn-166 coordinates L-cystine. Residues 180–202 lie on the Lumenal side of the membrane; the sequence is LFWVPSIKEQFLLKYPNGVNPVD. A helical transmembrane segment spans residues 203–225; sequence SNDVFFSLHAVALTLVVIVQCLL. Residue Asp-205 coordinates H(+). Over 226-234 the chain is Cytoplasmic; sequence YERGSQRVS. The chain crosses the membrane as a helical span at residues 235–257; it reads WLAISFLVLSWLFTLIALIMAAV. The Lumenal portion of the chain corresponds to 258–263; it reads GATTWL. A PQ-loop 2 domain is found at 263–328; that stretch reads LQFLFCFSYI…QSYNNDQWTL (66 aa). The chain crosses the membrane as a helical span at residues 264-289; the sequence is QFLFCFSYIKLAVTLVKYFPQAYMNF. Positions 273, 280, and 281 each coordinate L-cystine. Residues 290 to 298 are Cytoplasmic-facing; sequence HYKSTEGWS. A helical membrane pass occupies residues 299-308; the sequence is IGNVLLDFTG. L-cystine is bound by residues Asn-301 and Asp-305. Position 305 (Asp-305) interacts with H(+). Residues 309–331 are Lumenal-facing; that stretch reads GSFSLLQMFLQSYNNDQWTLIFG. The helical transmembrane segment at 332–354 threads the bilayer; the sequence is DPTKFGLGIFSIIFDVVFFIQHF. Asp-346 is a binding site for H(+). At 355–367 the chain is on the cytoplasmic side; it reads CLYRKKPGYDQLN. The short motif at 362–366 is the Lysosomal targeting motif element; that stretch reads GYDQL.

The protein belongs to the cystinosin family. As to quaternary structure, interacts with components of the V-ATPase complex. Interacts with components of the Ragulator complex. Interacts with RRAGA/RagA and RRAGC/RagC. Interacts with AP-3 complex subunit mu (AP3M1 or AP3M2).

The protein localises to the lysosome membrane. It localises to the melanosome membrane. The catalysed reaction is L-cystine(out) + H(+)(out) = L-cystine(in) + H(+)(in). With respect to regulation, switches between a lumen- and a cytosol-open conformation: pH induces conformational changes and shifts the equilibrium to facilitate the transition between the lumen- and cytosol-open conformation, thereby promoting cystine transport. Protonation of specific aspartate residues (Asp-205, Asp-305 and Asp-346) favors the cytosol-open conformation. Cystine/H(+) symporter that mediates export of cystine, the oxidized dimer of cysteine, from lysosomes. Plays an important role in melanin synthesis by catalyzing cystine export from melanosomes, possibly by inhibiting pheomelanin synthesis. In addition to cystine export, also acts as a positive regulator of mTORC1 signaling in kidney proximal tubular cells, via interactions with components of the v-ATPase and Ragulator complexes. Also involved in small GTPase-regulated vesicle trafficking and lysosomal localization of LAMP2A, independently of cystine transporter activity. The chain is Cystinosin from Bos taurus (Bovine).